Here is a 128-residue protein sequence, read N- to C-terminus: Con-Ins F1 (128 aa).

An N-terminal signal peptide occupies residues 1–24; that stretch reads MTTSSYFLLVTLGLLLYVCRSSFG. 4 disulfide bridges follow: Cys29/Cys104, Cys41/Cys107, Cys53/Cys120, and Cys106/Cys111. A propeptide spans 59–89 (c peptide); sequence LQGGTGKKRGRASPLRKRRAFLSMLKARAKR. Glu115 carries the 4-carboxyglutamate; partial modification. At Ser127 the chain carries Serine amide.

It belongs to the insulin family. Heterodimer of A and B chains; disulfide-linked. In terms of tissue distribution, expressed by the venom gland.

The protein resides in the secreted. Functionally, this venom insulin facilitates prey capture by rapidly inducing hypoglycemic shock. Intraperitoneal injection of this peptide into zebrafish lowers blood glucose with the same potency than human insulin. In vivo, when applied to water, this peptide reduces overall locomotor activity of zebrafish larvae, observed as a significant decrease in the percentage of time spent swimming and movement frequency. The sequence is that of Con-Ins F1 from Conus floridulus (Cone snail).